Here is a 446-residue protein sequence, read N- to C-terminus: Peptide chain release factor 1, mitochondrial (446 aa).

The N-terminal 62 residues, 1–62 (MSHHLCIWLF…LLNKSWSRGC (62 aa)), are a transit peptide targeting the mitochondrion. Positions 298-362 (PKDLRVDTFR…LRARLYQQII (65 aa)) are GGQ domain. The short motif at 312 to 314 (GGQ) is the GGQ element. The residue at position 314 (Gln314) is an N5-methylglutamine.

The protein belongs to the prokaryotic/mitochondrial release factor family. Methylation of glutamine in the GGQ triplet by HEMK1 is conserved from bacteria to mammals.

The protein localises to the mitochondrion. In terms of biological role, mitochondrial peptide chain release factor that directs the termination of translation in response to the peptide chain non-canonical stop codons AGG and AGA. Non-canonical termination codons AGG and AGA are found at the end of MT-CO1/COX1 and MT-ND6/ND6 open reading frames, respectively. Recognizes non-canonical stop codons via a network of interactions between the codon, MTRF1 and the ribosomal RNA (rRNA): in contrast to other translation release factors, which identify the codon in the A-site via direct interactions of amino acid side chains with the bases, MTRF1 repositions the first 2 bases of the stop codon to use an intricate network of interactions that includes residues of the release factor, the rRNA of the small ribosomal subunit, as well as neighboring bases of the mRNA. The chain is Peptide chain release factor 1, mitochondrial from Mus musculus (Mouse).